Here is a 483-residue protein sequence, read N- to C-terminus: Cobyric acid synthase (483 aa).

Residues 252 to 439 enclose the GATase cobBQ-type domain; that stretch reads KLNVVVPVLT…LHGFFDEAEA (188 aa). Cys333 (nucleophile) is an active-site residue. His431 is a catalytic residue.

The protein belongs to the CobB/CobQ family. CobQ subfamily.

It functions in the pathway cofactor biosynthesis; adenosylcobalamin biosynthesis. Functionally, catalyzes amidations at positions B, D, E, and G on adenosylcobyrinic A,C-diamide. NH(2) groups are provided by glutamine, and one molecule of ATP is hydrogenolyzed for each amidation. This is Cobyric acid synthase from Vibrio parahaemolyticus serotype O3:K6 (strain RIMD 2210633).